Reading from the N-terminus, the 555-residue chain is Acetyl-coenzyme A thioesterase (555 aa).

In terms of domain architecture, HotDog ACOT-type 1 spans 5 to 117 (APGEVVMSQA…FSTFVAKPVG (113 aa)). Lys-33 is subject to N6-succinyllysine. CoA contacts are provided by residues 53 to 55 (TAS), 82 to 84 (STS), and Arg-144. Residues Lys-159 and Lys-228 each carry the N6-succinyllysine modification. The 116-residue stretch at 179–294 (RGTSVQSIEL…FLIYNAADDK (116 aa)) folds into the HotDog ACOT-type 2 domain. 234–236 (KFR) is a binding site for CoA. The region spanning 340 to 549 (CIHWDISKQA…IQFLENPPDD (210 aa)) is the START domain.

Homodimer or homotetramer.

It is found in the cytoplasm. Its subcellular location is the cytosol. It carries out the reaction acetyl-CoA + H2O = acetate + CoA + H(+). The catalysed reaction is butanoyl-CoA + H2O = butanoate + CoA + H(+). It catalyses the reaction hexanoyl-CoA + H2O = hexanoate + CoA + H(+). It participates in lipid metabolism; fatty acid metabolism. Inhibited by ADP. Active in the presence of ATP. Cold labile, it dissociates into inactive monomers at low temperature. In terms of biological role, catalyzes the hydrolysis of acyl-CoAs into free fatty acids and coenzyme A (CoASH), regulating their respective intracellular levels. Preferentially hydrolyzes acetyl-CoA. The protein is Acetyl-coenzyme A thioesterase (ACOT12) of Homo sapiens (Human).